We begin with the raw amino-acid sequence, 61 residues long: MKRPSTQRAPATVNKGGNSMMKFYSEDAIGLKVGPTAVLFMSLIFIAFVIILHIMGKYTRS.

Topologically, residues 1-35 are cytoplasmic; that stretch reads MKRPSTQRAPATVNKGGNSMMKFYSEDAIGLKVGP. The chain crosses the membrane as a helical span at residues 36-56; the sequence is TAVLFMSLIFIAFVIILHIMG. Residues 57-61 lie on the Extracellular side of the membrane; sequence KYTRS.

The protein belongs to the SEC61-beta family. As to quaternary structure, the SEC61 channel-forming translocon complex.

The protein localises to the endoplasmic reticulum membrane. Functionally, component of SEC61 channel-forming translocon complex that mediates transport of signal peptide-containing precursor polypeptides across the endoplasmic reticulum (ER). Forms a ribosome receptor and a gated pore in the ER membrane, both functions required for cotranslational translocation of nascent polypeptides. The chain is Protein transport protein Sec61 subunit beta (sec61b) from Dictyostelium discoideum (Social amoeba).